Consider the following 92-residue polypeptide: Large ribosomal subunit protein eL31 (92 aa).

This sequence belongs to the eukaryotic ribosomal protein eL31 family.

In Pyrobaculum arsenaticum (strain DSM 13514 / JCM 11321 / PZ6), this protein is Large ribosomal subunit protein eL31.